Consider the following 470-residue polypeptide: Flavin-containing monooxygenase FMO GS-OX-like 6 (470 aa).

Glycine 17–glycine 22 serves as a coordination point for FAD. Glycine 214 to glycine 219 serves as a coordination point for NADP(+).

This sequence belongs to the FMO family. FAD is required as a cofactor.

Functionally, catalyzes the conversion of methylthioalkyl glucosinolates of any chain length into methylsulfinylalkyl glucosinolates. In Arabidopsis thaliana (Mouse-ear cress), this protein is Flavin-containing monooxygenase FMO GS-OX-like 6.